Reading from the N-terminus, the 263-residue chain is Lens fiber major intrinsic protein (263 aa).

The Cytoplasmic portion of the chain corresponds to 1–9 (MWELRSASF). Residues 10–29 (WRAIFAEFFATLFYVFFGLG) form a helical membrane-spanning segment. The Extracellular portion of the chain corresponds to 30-41 (SSLRWAPGPLHV). The chain crosses the membrane as a helical span at residues 42 to 59 (LQVAMAFGLALATLVQSV). At 60–61 (GH) the chain is on the cytoplasmic side. The segment at residues 62-77 (ISGAHVNPAVTFAFLV) is an intramembrane region (discontinuously helical). An NPA 1 motif is present at residues 68–70 (NPA). Residues 78–82 (GSQMS) are Cytoplasmic-facing. A helical membrane pass occupies residues 83-106 (LLRAFCYMAAQLLGAVAGAAVLYS). At 107-127 (VTPPAVRGNLALNTLHPAVSV) the chain is on the extracellular side. A helical membrane pass occupies residues 128 to 148 (GQATTVEIFLTLQFVLCIFAT). Topologically, residues 149–156 (YDERRNGQ) are cytoplasmic. A helical transmembrane segment spans residues 157–175 (LGSVALAVGFSLALGHLFG). Residues 176-178 (MYY) are Extracellular-facing. The segment at residues 179 to 193 (TGAGMNPARSFAPAI) is an intramembrane region (discontinuously helical). Positions 184–186 (NPA) match the NPA 2 motif. Over 194–200 (LTGNFTN) the chain is Extracellular. Residues 201 to 222 (HWVYWVGPIIGGGLGSLLYDFL) traverse the membrane as a helical segment. The Cytoplasmic portion of the chain corresponds to 223-263 (LFPRLKSISERLSVLKGAKPDVSNGQPEVTGEPVELNTQAL). An interaction with CALM region spans residues 227–237 (LKSISERLSVL). 2 positions are modified to phosphoserine: serine 235 and serine 245. 2 positions are modified to deamidated asparagine; by deterioration: asparagine 246 and asparagine 259.

Belongs to the MIP/aquaporin (TC 1.A.8) family. Homotetramer; each monomer provides an independent water pore. Two homotetramers on opposing membranes can dimerize, forming a cell-cell junction. Interacts with CALM; the calcium-calmodulin/CALM complex interacts with the cytoplasmic domains of two aquaporins, leading to channel closure. Interacts with BFSP1 (via C-terminus); prevents calcium-dependent inhibition of the water channel activity. In terms of processing, subject to partial proteolytic cleavage in the eye lens core. Partial proteolysis promotes interactions between tetramers from adjoining membranes. Post-translationally, fatty acylated at Met-1 and Lys-238. The acyl modifications, in decreasing order of ion abundance, are: oleoyl (C18:1) &gt; palmitoyl (C16:0) &gt; stearoyl (C18:0) &gt; eicosenoyl (C20:1) &gt; dihomo-gamma-linolenoyl (C20:3) &gt; palmitoleoyl (C16:1) &gt; eicosadienoyl (C20:2). Expressed in the cortex and nucleus of the retina lens (at protein level). Major component of lens fiber gap junctions.

The protein resides in the cell membrane. Its subcellular location is the cell junction. It carries out the reaction H2O(in) = H2O(out). With respect to regulation, the water channel activity is inhibited by calcium through calmodulin/CALM. In terms of biological role, aquaporins form homotetrameric transmembrane channels, with each monomer independently mediating water transport across the plasma membrane along its osmotic gradient. Specifically expressed in lens fiber cells, this aquaporin is crucial for maintaining lens water homeostasis and transparency. Beyond water permeability, it also acts as a cell-to-cell adhesion molecule, forming thin junctions between lens fiber cells that are essential for maintaining the ordered structure and transparency of the lens. The protein is Lens fiber major intrinsic protein of Homo sapiens (Human).